Reading from the N-terminus, the 253-residue chain is Uridine phosphorylase (253 aa).

Belongs to the PNP/UDP phosphorylase family. As to quaternary structure, homohexamer.

The protein resides in the cytoplasm. The enzyme catalyses uridine + phosphate = alpha-D-ribose 1-phosphate + uracil. The protein operates within pyrimidine metabolism; UMP biosynthesis via salvage pathway; uracil from uridine (phosphorylase route): step 1/1. Functionally, catalyzes the reversible phosphorylytic cleavage of uridine to uracil and ribose-1-phosphate. The protein is Uridine phosphorylase (udp) of Klebsiella aerogenes (Enterobacter aerogenes).